The chain runs to 364 residues: Chaperone protein DnaJ 1 (364 aa).

Residues aspartate 7 to leucine 71 form the J domain. The CR-type zinc finger occupies glycine 124–glutamine 200. Zn(2+) contacts are provided by cysteine 137, cysteine 140, cysteine 154, cysteine 157, cysteine 174, cysteine 177, cysteine 188, and cysteine 191. CXXCXGXG motif repeat units lie at residues cysteine 137–glycine 144, cysteine 154–glycine 161, cysteine 174–glycine 181, and cysteine 188–glycine 195.

It belongs to the DnaJ family. As to quaternary structure, homodimer. Zn(2+) is required as a cofactor.

The protein resides in the cytoplasm. Its function is as follows. Participates actively in the response to hyperosmotic and heat shock by preventing the aggregation of stress-denatured proteins and by disaggregating proteins, also in an autonomous, DnaK-independent fashion. Unfolded proteins bind initially to DnaJ; upon interaction with the DnaJ-bound protein, DnaK hydrolyzes its bound ATP, resulting in the formation of a stable complex. GrpE releases ADP from DnaK; ATP binding to DnaK triggers the release of the substrate protein, thus completing the reaction cycle. Several rounds of ATP-dependent interactions between DnaJ, DnaK and GrpE are required for fully efficient folding. Also involved, together with DnaK and GrpE, in the DNA replication of plasmids through activation of initiation proteins. The chain is Chaperone protein DnaJ 1 from Aquifex aeolicus (strain VF5).